We begin with the raw amino-acid sequence, 1385 residues long: DNA-directed RNA polymerase subunit beta' (1385 aa).

Zn(2+) is bound by residues Cys-72, Cys-74, Cys-87, and Cys-90. Positions 463, 465, and 467 each coordinate Mg(2+). The Zn(2+) site is built by Cys-813, Cys-887, Cys-894, and Cys-897.

It belongs to the RNA polymerase beta' chain family. The RNAP catalytic core consists of 2 alpha, 1 beta, 1 beta' and 1 omega subunit. When a sigma factor is associated with the core the holoenzyme is formed, which can initiate transcription. Requires Mg(2+) as cofactor. Zn(2+) serves as cofactor.

It catalyses the reaction RNA(n) + a ribonucleoside 5'-triphosphate = RNA(n+1) + diphosphate. In terms of biological role, DNA-dependent RNA polymerase catalyzes the transcription of DNA into RNA using the four ribonucleoside triphosphates as substrates. The protein is DNA-directed RNA polymerase subunit beta' of Trichlorobacter lovleyi (strain ATCC BAA-1151 / DSM 17278 / SZ) (Geobacter lovleyi).